Reading from the N-terminus, the 348-residue chain is 2-methyl-6-phytyl-1,4-hydroquinone methyltransferase 2, chloroplastic (348 aa).

The disordered stretch occupies residues 1 to 48 (MAMASSAYAPAGGVGTHSAPGRIRPPRGLGFSTTTTKSRPLVLTRRGG). The N-terminal 59 residues, 1–59 (MAMASSAYAPAGGVGTHSAPGRIRPPRGLGFSTTTTKSRPLVLTRRGGGGGNISVARLR), are a transit peptide targeting the chloroplast. Residues 60–317 (CAASSSSAAA…PVNPITFLFR (258 aa)) lie on the Chloroplast intermembrane side of the membrane. The SAM motif I stretch occupies residues 125–134 (VVDVGGGTGF). The segment at 170–183 (VTIMEGDAEDLPFP) is SAM motif II. An SAM motif III region spans residues 211-224 (RVLRLGGVACMIGP). Residues 318–338 (FLMGTICAAYYVLVPIYMWIK) form a helical membrane-spanning segment. At 339-348 (DQIVPKGMPI) the chain is on the stromal side.

Belongs to the class I-like SAM-binding methyltransferase superfamily. MPBQ/MBSQ MT family.

It is found in the plastid. It localises to the chloroplast inner membrane. The enzyme catalyses 2-methyl-6-phytyl-1,4-benzene-1,4-diol + S-adenosyl-L-methionine = 2,3-dimethyl-6-phytylbenzene-1,4-diol + S-adenosyl-L-homocysteine + H(+). It carries out the reaction 2-methyl-6-(all-trans-nonaprenyl)benzene-1,4-diol + S-adenosyl-L-methionine = plastoquinol-9 + S-adenosyl-L-homocysteine + H(+). The catalysed reaction is 6-geranylgeranyl-2-methylbenzene-1,4-diol + S-adenosyl-L-methionine = 6-geranylgeranyl-2,3-dimethylbenzene-1,4-diol + S-adenosyl-L-homocysteine + H(+). The protein operates within cofactor biosynthesis; tocopherol biosynthesis. Involved in a key methylation step in both tocopherols (vitamin E) and plastoquinone synthesis. Catalyzes the conversion of 2-methyl-6-phytyl-1,4-hydroquinone (MPBQ) to 2,3-dimethyl-6-phytyl-1,4-hydroquinone (DMPQ, a substrate for tocopherol cyclase), and 2-methyl-6-solanyl-1,4-benzoquinone (MSBQ) to plastoquinone. This is 2-methyl-6-phytyl-1,4-hydroquinone methyltransferase 2, chloroplastic from Oryza sativa subsp. japonica (Rice).